The sequence spans 271 residues: Large ribosomal subunit protein uL15c (271 aa).

Disordered stretches follow at residues 1–21 and 66–120; these read MASL…NNYP and SNVS…QKSR. The transit peptide at 1–61 directs the protein to the chloroplast; sequence MASLLSLSST…KESTRLVVVA (61 aa). Over residues 66–76 the composition is skewed to low complexity; sequence SNVSPSIGSGS. The segment covering 91-101 has biased composition (basic residues); that stretch reads SRKKGKRKGRG. Positions 102–114 are enriched in gly residues; sequence HAAGQGGSCGFGM.

As to quaternary structure, component of the chloroplast large ribosomal subunit (LSU). Mature 70S chloroplast ribosomes of higher plants consist of a small (30S) and a large (50S) subunit. The 30S small subunit contains 1 molecule of ribosomal RNA (16S rRNA) and 24 different proteins. The 50S large subunit contains 3 rRNA molecules (23S, 5S and 4.5S rRNA) and 33 different proteins.

It is found in the plastid. Its subcellular location is the chloroplast. Its function is as follows. Component of the chloroplast ribosome (chloro-ribosome), a dedicated translation machinery responsible for the synthesis of chloroplast genome-encoded proteins, including proteins of the transcription and translation machinery and components of the photosynthetic apparatus. The sequence is that of Large ribosomal subunit protein uL15c (RPL15) from Spinacia oleracea (Spinach).